We begin with the raw amino-acid sequence, 864 residues long: Alanine--tRNA ligase (864 aa).

The Zn(2+) site is built by His-553, His-557, Cys-655, and His-659. Positions 828–847 (VGGKGGGRPDMAQAGGKDPS) are disordered.

It belongs to the class-II aminoacyl-tRNA synthetase family. It depends on Zn(2+) as a cofactor.

It localises to the cytoplasm. It catalyses the reaction tRNA(Ala) + L-alanine + ATP = L-alanyl-tRNA(Ala) + AMP + diphosphate. Catalyzes the attachment of alanine to tRNA(Ala) in a two-step reaction: alanine is first activated by ATP to form Ala-AMP and then transferred to the acceptor end of tRNA(Ala). Also edits incorrectly charged Ser-tRNA(Ala) and Gly-tRNA(Ala) via its editing domain. The protein is Alanine--tRNA ligase of Hydrogenovibrio crunogenus (strain DSM 25203 / XCL-2) (Thiomicrospira crunogena).